The sequence spans 277 residues: S-formylglutathione hydrolase FrmB (277 aa).

Catalysis depends on charge relay system residues Ser145, Asp221, and His254.

This sequence belongs to the esterase D family.

It catalyses the reaction S-formylglutathione + H2O = formate + glutathione + H(+). Functionally, serine hydrolase involved in the detoxification of formaldehyde. Hydrolyzes S-formylglutathione to glutathione and formate. The chain is S-formylglutathione hydrolase FrmB (frmB) from Escherichia coli O139:H28 (strain E24377A / ETEC).